A 577-amino-acid chain; its full sequence is Glucose-6-phosphate 1-dehydrogenase, chloroplastic (577 aa).

The interval 1–20 (MGVQLRLNPCSSSSAATSPS) is disordered. The N-terminal 63 residues, 1-63 (MGVQLRLNPC…QPRKHFEVFS (63 aa)), are a transit peptide targeting the chloroplast. Positions 11–20 (SSSSAATSPS) are enriched in low complexity. NADP(+) contacts are provided by residues 97 to 104 (GASGDLAK) and arginine 131. A disulfide bridge connects residues cysteine 149 and cysteine 157. Lysine 234 lines the NADP(+) pocket. D-glucose 6-phosphate contacts are provided by residues lysine 234, 264–268 (HYLGK), glutamate 302, and aspartate 321. Residue histidine 326 is the Proton acceptor of the active site. Residue lysine 419 coordinates NADP(+). 2 residues coordinate D-glucose 6-phosphate: lysine 422 and lysine 427. NADP(+) is bound by residues arginine 428, arginine 432, and arginine 461. Glutamine 463 contributes to the D-glucose 6-phosphate binding site. Residues 469–471 (YLK) and arginine 554 contribute to the NADP(+) site.

Belongs to the glucose-6-phosphate dehydrogenase family. In terms of assembly, homodimer. Green tissues, leaves and chloroplasts.

The protein resides in the plastid. Its subcellular location is the chloroplast. The enzyme catalyses D-glucose 6-phosphate + NADP(+) = 6-phospho-D-glucono-1,5-lactone + NADPH + H(+). The protein operates within carbohydrate degradation; pentose phosphate pathway; D-ribulose 5-phosphate from D-glucose 6-phosphate (oxidative stage): step 1/3. Its activity is regulated as follows. Regulated by metabolites. Post-translationally inactivated by cysteine-mediated redox modification via the ferredoxin-thioredoxin system in the light and this avoids futile cycles with photosynthetic CO2 fixation. Catalyzes the rate-limiting step of the oxidative pentose-phosphate pathway, which represents a route for the dissimilation of carbohydrates besides glycolysis. The main function of this enzyme is to provide reducing power (NADPH) and pentose phosphates for fatty acid and nucleic acid synthesis which are involved in membrane synthesis and cell division. The sequence is that of Glucose-6-phosphate 1-dehydrogenase, chloroplastic from Solanum tuberosum (Potato).